The sequence spans 261 residues: Shikimate dehydrogenase (NADP(+)) (261 aa).

Residues serine 13–serine 15 and threonine 60 contribute to the shikimate site. The active-site Proton acceptor is lysine 64. Positions 85 and 100 each coordinate shikimate. Residues glycine 121 to alanine 125 and isoleucine 202 contribute to the NADP(+) site. Residue tyrosine 204 participates in shikimate binding. Residue glycine 225 coordinates NADP(+).

Belongs to the shikimate dehydrogenase family. In terms of assembly, homodimer.

It catalyses the reaction shikimate + NADP(+) = 3-dehydroshikimate + NADPH + H(+). It participates in metabolic intermediate biosynthesis; chorismate biosynthesis; chorismate from D-erythrose 4-phosphate and phosphoenolpyruvate: step 4/7. Functionally, involved in the biosynthesis of the chorismate, which leads to the biosynthesis of aromatic amino acids. Catalyzes the reversible NADPH linked reduction of 3-dehydroshikimate (DHSA) to yield shikimate (SA). In Exiguobacterium sibiricum (strain DSM 17290 / CCUG 55495 / CIP 109462 / JCM 13490 / 255-15), this protein is Shikimate dehydrogenase (NADP(+)).